Reading from the N-terminus, the 479-residue chain is Ribosomal RNA small subunit methyltransferase F (479 aa).

Residues 125 to 131, Glu-149, Asp-176, and Asp-194 contribute to the S-adenosyl-L-methionine site; that span reads AAAPGSK. Cys-247 serves as the catalytic Nucleophile.

This sequence belongs to the class I-like SAM-binding methyltransferase superfamily. RsmB/NOP family.

Its subcellular location is the cytoplasm. It catalyses the reaction cytidine(1407) in 16S rRNA + S-adenosyl-L-methionine = 5-methylcytidine(1407) in 16S rRNA + S-adenosyl-L-homocysteine + H(+). Functionally, specifically methylates the cytosine at position 1407 (m5C1407) of 16S rRNA. The sequence is that of Ribosomal RNA small subunit methyltransferase F from Salmonella schwarzengrund (strain CVM19633).